The primary structure comprises 429 residues: Adenylosuccinate synthetase (429 aa).

GTP is bound by residues 12-18 (GDEGKGK) and 40-42 (GHT). Aspartate 13 functions as the Proton acceptor in the catalytic mechanism. The Mg(2+) site is built by aspartate 13 and glycine 40. IMP-binding positions include 13 to 16 (DEGK), 38 to 41 (NAGH), threonine 128, arginine 142, glutamine 223, threonine 238, and arginine 302. The Proton donor role is filled by histidine 41. Position 298–304 (298–304 (VNTGRPR)) interacts with substrate. GTP-binding positions include arginine 304, 330 to 332 (KLD), and 412 to 414 (GVG).

The protein belongs to the adenylosuccinate synthetase family. Homodimer. It depends on Mg(2+) as a cofactor.

The protein localises to the cytoplasm. The catalysed reaction is IMP + L-aspartate + GTP = N(6)-(1,2-dicarboxyethyl)-AMP + GDP + phosphate + 2 H(+). It functions in the pathway purine metabolism; AMP biosynthesis via de novo pathway; AMP from IMP: step 1/2. Functionally, plays an important role in the de novo pathway of purine nucleotide biosynthesis. Catalyzes the first committed step in the biosynthesis of AMP from IMP. The protein is Adenylosuccinate synthetase of Paenarthrobacter aurescens (strain TC1).